A 213-amino-acid chain; its full sequence is Superoxide dismutase [Mn] (213 aa).

The Mn(2+) site is built by H27, H82, D168, and H172.

This sequence belongs to the iron/manganese superoxide dismutase family. As to quaternary structure, homodimer. Mn(2+) serves as cofactor.

The catalysed reaction is 2 superoxide + 2 H(+) = H2O2 + O2. Functionally, destroys superoxide anion radicals which are normally produced within the cells and which are toxic to biological systems. The chain is Superoxide dismutase [Mn] (sodA) from Mannheimia haemolytica (Pasteurella haemolytica).